Reading from the N-terminus, the 131-residue chain is Large ribosomal subunit protein bL17 (131 aa).

The protein belongs to the bacterial ribosomal protein bL17 family. Part of the 50S ribosomal subunit. Contacts protein L32.

The polypeptide is Large ribosomal subunit protein bL17 (Teredinibacter turnerae (strain ATCC 39867 / T7901)).